The sequence spans 246 residues: 3-deoxy-manno-octulosonate cytidylyltransferase (246 aa).

Belongs to the KdsB family.

It is found in the cytoplasm. It catalyses the reaction 3-deoxy-alpha-D-manno-oct-2-ulosonate + CTP = CMP-3-deoxy-beta-D-manno-octulosonate + diphosphate. Its pathway is nucleotide-sugar biosynthesis; CMP-3-deoxy-D-manno-octulosonate biosynthesis; CMP-3-deoxy-D-manno-octulosonate from 3-deoxy-D-manno-octulosonate and CTP: step 1/1. It participates in bacterial outer membrane biogenesis; lipopolysaccharide biosynthesis. Activates KDO (a required 8-carbon sugar) for incorporation into bacterial lipopolysaccharide in Gram-negative bacteria. The chain is 3-deoxy-manno-octulosonate cytidylyltransferase from Bradyrhizobium sp. (strain BTAi1 / ATCC BAA-1182).